Consider the following 335-residue polypeptide: Olfactory receptor 52B6 (335 aa).

The Extracellular portion of the chain corresponds to 1–45; that stretch reads MAQVRALHKIMALFSANSIGAMNNSDTRIAGCFLTGIPGLEQLHI. The N-linked (GlcNAc...) asparagine glycan is linked to N23. A helical membrane pass occupies residues 46 to 66; it reads WLSIPFCIMYITALEGNGILI. Topologically, residues 67 to 74 are cytoplasmic; sequence CVILSQAI. A helical membrane pass occupies residues 75–95; sequence LHEPMYIFLSMLASADVLLST. Residues 96-119 lie on the Extracellular side of the membrane; it reads TTMPKALANLWLGYSLISFDGCLT. A disulfide bridge links C117 with C208. The helical transmembrane segment at 120-139 threads the bilayer; it reads QMFFIHFLFIHSAVLLAMAF. The Cytoplasmic portion of the chain corresponds to 140–158; the sequence is DRYVAICSPLRYVTILTSK. The chain crosses the membrane as a helical span at residues 159–179; sequence VIGKIVTAALSHSFIIMFPSI. Over 180–215 the chain is Extracellular; that stretch reads FLLEHLHYCQINIIAHTFCEHMGIAHLSCSDISINV. A helical membrane pass occupies residues 216 to 236; that stretch reads WYGLAAALLSTGLDIMLITVS. The Cytoplasmic segment spans residues 237-256; it reads YIHILQAVFRLLSQDARSKA. A helical transmembrane segment spans residues 257–277; the sequence is LSTCGSHICVILLFYVPALFS. Residues 278 to 293 are Extracellular-facing; it reads VFAYRFGGRSVPCYVH. The chain crosses the membrane as a helical span at residues 294-314; that stretch reads ILLASLYVVIPPMLNPVIYGV. Residues 315 to 335 are Cytoplasmic-facing; it reads RTKPILEGAKQMFSNLAKGSK.

Belongs to the G-protein coupled receptor 1 family.

The protein resides in the cell membrane. Its function is as follows. Odorant receptor. This chain is Olfactory receptor 52B6 (OR52B6), found in Homo sapiens (Human).